The following is a 525-amino-acid chain: Signal recognition particle protein (525 aa).

Residues 107 to 114 (GLQGSGKT), 196 to 200 (DTAGR), and 254 to 257 (TKLD) contribute to the GTP site. Positions 437–525 (GMGIPGIGRK…LSKLKFPGKK (89 aa)) are disordered. Residues 447–467 (SATRKSKGAKGKSGKKSKKGT) show a composition bias toward basic residues. The span at 480 to 497 (GVPGMPGLAGLPGGLPDL) shows a compositional bias: low complexity.

The protein belongs to the GTP-binding SRP family. SRP54 subfamily. Part of the signal recognition particle protein translocation system, which is composed of SRP and FtsY.

It is found in the cytoplasm. The catalysed reaction is GTP + H2O = GDP + phosphate + H(+). Its function is as follows. Involved in targeting and insertion of nascent membrane proteins into the cytoplasmic membrane. Binds to the hydrophobic signal sequence of the ribosome-nascent chain (RNC) as it emerges from the ribosomes. The SRP-RNC complex is then targeted to the cytoplasmic membrane where it interacts with the SRP receptor FtsY. In Mycobacterium bovis (strain ATCC BAA-935 / AF2122/97), this protein is Signal recognition particle protein.